The sequence spans 842 residues: Elongation factor 2 (842 aa).

A tr-type G domain is found at 17 to 346; that stretch reads TNVRNMSVIA…MIVLHLPSPV (330 aa). GTP contacts are provided by residues 26–33, 158–161, and 213–215; these read AHVDHGKS, NKVD, and SGL. Residue Lys509 is modified to N6,N6,N6-trimethyllysine; by EFM3; alternate. At Lys509 the chain carries N6,N6-dimethyllysine; by EFM3; alternate. Lys509 is modified (N6-methyllysine; by EFM3; alternate). Phosphoserine is present on Ser579. Position 613 is an N6,N6-dimethyllysine; by EFM2; alternate (Lys613). N6-methyllysine; by EFM2; alternate is present on Lys613. His699 is modified (diphthamide). Phosphothreonine is present on residues Thr713 and Thr763. Residue Lys841 forms a Glycyl lysine isopeptide (Lys-Gly) (interchain with G-Cter in ubiquitin) linkage.

Belongs to the TRAFAC class translation factor GTPase superfamily. Classic translation factor GTPase family. EF-G/EF-2 subfamily. As to quaternary structure, binds to 80S ribosomes. Actively translating ribosomes show mutually exclusive binding of eIF5a (HYP2 or ANB1) and EFT1/eEF2. Interacts with the 40S ribosomal subunit protein RPL9A; the interaction is direct. Interacts with the 60S ribosomal subunit proteins RPL12A; the interaction is direct. Interacts with RPS23A; the interaction is direct. Interacts with 18S rRNA; the interaction is direct. Interacts with 25S rRNA; the interaction is direct. Interacts with RPL0. Interacts with STM1; promoting ribosome inactivation. (Microbial infection) Diphthamide can be ADP-ribosylated by diphtheria toxin and by Pseudomonas exotoxin A, thus abolishing its function.

The protein localises to the cytoplasm. The enzyme catalyses GTP + H2O = GDP + phosphate + H(+). It participates in protein biosynthesis; polypeptide chain elongation. With respect to regulation, inhibited by fusidic acid and sordarin, which prevent the release of eEF2 from the ribosome after the translocation step. While fusidic acid acts on all eukaryotic eEF2, sordarin specifically binds and inhibits only selected fungal eEF2. Functionally, catalyzes the GTP-dependent ribosomal translocation step during translation elongation. During this step, the ribosome changes from the pre-translocational (PRE) to the post-translocational (POST) state as the newly formed A-site-bound peptidyl-tRNA and P-site-bound deacylated tRNA move to the P and E sites, respectively. Catalyzes the coordinated movement of the two tRNA molecules, the mRNA and conformational changes in the ribosome. In Saccharomyces cerevisiae (strain ATCC 204508 / S288c) (Baker's yeast), this protein is Elongation factor 2 (EFT1).